The chain runs to 659 residues: Heparin-sulfate lyase (659 aa).

Positions Met-1–Ala-24 are cleaved as a signal peptide. Tyr-294 (proton acceptor) is an active-site residue.

It belongs to the polysaccharide lyase 12 family.

The protein localises to the periplasm. It catalyses the reaction Elimination of sulfate, appears to act on linkages between N-acetyl-D-glucosamine and uronate. Product is an unsaturated sugar.. Functionally, specifically cleaves heparan sulfate-rich regions of acidic polysaccharides. Does not act on N,O-desulfated glucosamine or N-acetyl-O-sulfated glucosamine linkages. Functions in cleaving metazoan heparan sulfate and providing carbon, nitrogen and sulfate sources for microorganisms. The sequence is that of Heparin-sulfate lyase (hepC) from Pedobacter heparinus (strain ATCC 13125 / DSM 2366 / CIP 104194 / JCM 7457 / NBRC 12017 / NCIMB 9290 / NRRL B-14731 / HIM 762-3).